A 269-amino-acid chain; its full sequence is CUE domain-containing protein 2-B (269 aa).

The tract at residues 110–130 (ASPSEKTATEPLEGAVAQDKD) is disordered. In terms of domain architecture, CUE spans 131–174 (DPKTGVDLLLEIFPSCTITQAQTALSMAKGDLEDAVQIIVDGKV).

It belongs to the CUEDC2 family. Phosphorylated.

Its subcellular location is the cytoplasm. It localises to the nucleus. Functionally, may play a role in targeting proteins for ubiquitination and subsequent proteasomal degradation. The protein is CUE domain-containing protein 2-B (cuedc2-b) of Xenopus laevis (African clawed frog).